The sequence spans 237 residues: Aspartate/glutamate leucyltransferase (237 aa).

This sequence belongs to the R-transferase family. Bpt subfamily.

The protein localises to the cytoplasm. It catalyses the reaction N-terminal L-glutamyl-[protein] + L-leucyl-tRNA(Leu) = N-terminal L-leucyl-L-glutamyl-[protein] + tRNA(Leu) + H(+). The catalysed reaction is N-terminal L-aspartyl-[protein] + L-leucyl-tRNA(Leu) = N-terminal L-leucyl-L-aspartyl-[protein] + tRNA(Leu) + H(+). In terms of biological role, functions in the N-end rule pathway of protein degradation where it conjugates Leu from its aminoacyl-tRNA to the N-termini of proteins containing an N-terminal aspartate or glutamate. The protein is Aspartate/glutamate leucyltransferase of Shewanella amazonensis (strain ATCC BAA-1098 / SB2B).